The following is a 210-amino-acid chain: Putative 3-methyladenine DNA glycosylase (210 aa).

It belongs to the DNA glycosylase MPG family.

This Corynebacterium glutamicum (strain R) protein is Putative 3-methyladenine DNA glycosylase.